The following is a 68-amino-acid chain: Large ribosomal subunit protein uL29 (68 aa).

This sequence belongs to the universal ribosomal protein uL29 family.

This Streptococcus pneumoniae (strain JJA) protein is Large ribosomal subunit protein uL29.